Reading from the N-terminus, the 465-residue chain is Hepatocyte nuclear factor 6 (465 aa).

Disordered regions lie at residues 15 to 84 (GVSH…GPLH) and 119 to 141 (SDKF…HQRL). Over residues 123–140 (PHHHHHHHHHHHPHHHQR) the composition is skewed to basic residues. A DNA-binding region (CUT) is located at residues 283–369 (GSNSGQMEEI…QRMSALRLAA (87 aa)). The homeobox DNA-binding region spans 385–444 (PKKPRLVFTDVQRRTLHAIFKENKRPSKELQITISQQLGLELSTVSNFFMNARRRSLDKW). Residues 442–465 (DKWQDEGSSNSGNSSSSSSTCTKA) are disordered. Positions 448–465 (GSSNSGNSSSSSSTCTKA) are enriched in low complexity.

Belongs to the CUT homeobox family. As to quaternary structure, binds DNA as a monomer. As to expression, expressed in liver, brain, spleen and testis.

The protein localises to the nucleus. Its function is as follows. Transcriptional activator. Binds the consensus sequence 5'-DHWATTGAYTWWD-3' on a variety of gene promoters such as those of HNF3B and TTR. Important for liver genes transcription. The affinity of HNF-6-alpha and HNF-6-beta for DNA differs depending on the target sequence. In Rattus norvegicus (Rat), this protein is Hepatocyte nuclear factor 6 (Onecut1).